We begin with the raw amino-acid sequence, 338 residues long: GTPase Obg (338 aa).

Residues 1–159 form the Obg domain; that stretch reads MSFIDEVKIH…RWLRLELKLM (159 aa). Residues 160–331 enclose the OBG-type G domain; sequence ADVGLLGMPS…LLDEIARQLW (172 aa). GTP is bound by residues 166-173, 191-195, 213-216, 283-286, and 312-314; these read GMPSVGKS, FTTLK, DIPG, NKMD, and SAA. Residues S173 and T193 each coordinate Mg(2+).

It belongs to the TRAFAC class OBG-HflX-like GTPase superfamily. OBG GTPase family. In terms of assembly, monomer. It depends on Mg(2+) as a cofactor.

The protein localises to the cytoplasm. Its function is as follows. An essential GTPase which binds GTP, GDP and possibly (p)ppGpp with moderate affinity, with high nucleotide exchange rates and a fairly low GTP hydrolysis rate. Plays a role in control of the cell cycle, stress response, ribosome biogenesis and in those bacteria that undergo differentiation, in morphogenesis control. This chain is GTPase Obg, found in Geotalea daltonii (strain DSM 22248 / JCM 15807 / FRC-32) (Geobacter daltonii).